A 380-amino-acid chain; its full sequence is Dynactin subunit 2 (380 aa).

The tract at residues 1-32 is disordered; sequence MADPKFQNLPGIAYDQPDVYETPDDPELDTSD. Residues 21-32 are compositionally biased toward acidic residues; that stretch reads ETPDDPELDTSD. Residues Ser-49, Ser-58, and Ser-86 each carry the phosphoserine modification. 2 coiled-coil regions span residues 100–135 and 353–377; these read VQKCQRLQIEMNELLNEVAALQVDRKVADEEKQSYD and ETFAQNLETINSKVAKVEQRVAAIS.

This sequence belongs to the dynactin subunit 2 family. In terms of assembly, subunit of dynactin, a multiprotein complex associated with dynein.

Its subcellular location is the cytoplasm. The protein localises to the cytoskeleton. The protein resides in the membrane. In terms of biological role, modulates cytoplasmic dynein binding to an organelle, and plays a role in prometaphase chromosome alignment and spindle organization during mitosis. May play a role in synapse formation during brain development. In Drosophila melanogaster (Fruit fly), this protein is Dynactin subunit 2.